A 125-amino-acid chain; its full sequence is Large ribosomal subunit protein bL12 (125 aa).

The protein belongs to the bacterial ribosomal protein bL12 family. As to quaternary structure, homodimer. Part of the ribosomal stalk of the 50S ribosomal subunit. Forms a multimeric L10(L12)X complex, where L10 forms an elongated spine to which 2 to 4 L12 dimers bind in a sequential fashion. Binds GTP-bound translation factors.

Functionally, forms part of the ribosomal stalk which helps the ribosome interact with GTP-bound translation factors. Is thus essential for accurate translation. The sequence is that of Large ribosomal subunit protein bL12 from Chlorobium limicola (strain DSM 245 / NBRC 103803 / 6330).